Here is a 306-residue protein sequence, read N- to C-terminus: MSNWLVDKLIPSIMRSEVKKSSVPEGLWHKCPSCDAVLYRPELEKTLDVCPKCNHHMRIGARARLNIFLDVDGREELGVDLEPVDRLKFRDGKKYKDRLTAAQKQTGEKDALISMSGTLLGMPVVASAFEFSFMGGSMGAIVGERFVRAANYALENRCPMICFAASGGARMQEALISLMQMAKTSAVLARLREEGLPFISVLTDPVYGGVSASLAMLGDVIVAEPKALIGFAGPRVIEQTVREKLPEGFQRSEFLLDHGAIDMIIARSELRPRLGNLLAQMMNLPTPRFVAPVIEPIIVPPAPATI.

Residues 27 to 296 (LWHKCPSCDA…PRFVAPVIEP (270 aa)) form the CoA carboxyltransferase N-terminal domain. Zn(2+) is bound by residues cysteine 31, cysteine 34, cysteine 50, and cysteine 53. Residues 31–53 (CPSCDAVLYRPELEKTLDVCPKC) form a C4-type zinc finger.

The protein belongs to the AccD/PCCB family. As to quaternary structure, acetyl-CoA carboxylase is a heterohexamer composed of biotin carboxyl carrier protein (AccB), biotin carboxylase (AccC) and two subunits each of ACCase subunit alpha (AccA) and ACCase subunit beta (AccD). Requires Zn(2+) as cofactor.

The protein localises to the cytoplasm. The enzyme catalyses N(6)-carboxybiotinyl-L-lysyl-[protein] + acetyl-CoA = N(6)-biotinyl-L-lysyl-[protein] + malonyl-CoA. It functions in the pathway lipid metabolism; malonyl-CoA biosynthesis; malonyl-CoA from acetyl-CoA: step 1/1. Its function is as follows. Component of the acetyl coenzyme A carboxylase (ACC) complex. Biotin carboxylase (BC) catalyzes the carboxylation of biotin on its carrier protein (BCCP) and then the CO(2) group is transferred by the transcarboxylase to acetyl-CoA to form malonyl-CoA. This Pseudomonas syringae pv. tomato (strain ATCC BAA-871 / DC3000) protein is Acetyl-coenzyme A carboxylase carboxyl transferase subunit beta.